We begin with the raw amino-acid sequence, 81 residues long: Photosystem I iron-sulfur center (81 aa).

4Fe-4S ferredoxin-type domains are found at residues 1–31 and 39–68; these read MSHS…MVPW and IASS…IRVY. [4Fe-4S] cluster contacts are provided by C11, C14, C17, C21, C48, C51, C54, and C58.

As to quaternary structure, the cyanobacterial PSI reaction center is composed of one copy each of PsaA,B,C,D,E,F,I,J,K,L,M and X, and forms trimeric complexes. [4Fe-4S] cluster is required as a cofactor.

It localises to the cellular thylakoid membrane. It carries out the reaction reduced [plastocyanin] + hnu + oxidized [2Fe-2S]-[ferredoxin] = oxidized [plastocyanin] + reduced [2Fe-2S]-[ferredoxin]. Functionally, apoprotein for the two 4Fe-4S centers FA and FB of photosystem I (PSI); essential for photochemical activity. FB is the terminal electron acceptor of PSI, donating electrons to ferredoxin. The C-terminus interacts with PsaA/B/D and helps assemble the protein into the PSI complex. Required for binding of PsaD and PsaE to PSI. PSI is a plastocyanin/cytochrome c6-ferredoxin oxidoreductase, converting photonic excitation into a charge separation, which transfers an electron from the donor P700 chlorophyll pair to the spectroscopically characterized acceptors A0, A1, FX, FA and FB in turn. This is Photosystem I iron-sulfur center from Microcystis aeruginosa (strain NIES-843 / IAM M-2473).